A 476-amino-acid polypeptide reads, in one-letter code: Transcriptional regulator claA (476 aa).

The segment at residues 25–52 is a DNA-binding region (zn(2)-C6 fungal-type); that stretch reads CDTCLKAKIKCSQAKPTCARCLQQGRQC. The segment at 63 to 92 is disordered; sequence PSTKNLPLDQLQQPKGRTAGGTARRSLSRR. Positions 64-77 are enriched in polar residues; sequence STKNLPLDQLQQPK.

The protein localises to the nucleus. Transcriptional regulator; part of the cla gene cluster that produces clavatol and ortho-quinone methide. The clavatol biosynthesis cluster cla and the terrestric acid cluster tra are both involved in the production of peniphenones and penilactones. This is Transcriptional regulator claA from Penicillium crustosum (Blue mold fungus).